Here is a 397-residue protein sequence, read N- to C-terminus: Tyrosine aminotransferase (397 aa).

Substrate-binding residues include Gly34, Tyr66, Trp131, and Asn184. At Lys247 the chain carries N6-(pyridoxal phosphate)lysine. Arg375 is a substrate binding site.

This sequence belongs to the class-I pyridoxal-phosphate-dependent aminotransferase family. In terms of assembly, homodimer. The cofactor is pyridoxal 5'-phosphate.

It catalyses the reaction L-tyrosine + 2-oxoglutarate = 3-(4-hydroxyphenyl)pyruvate + L-glutamate. The enzyme catalyses 4-methylsulfanyl-2-oxobutanoate + L-tyrosine = 3-(4-hydroxyphenyl)pyruvate + L-methionine. The catalysed reaction is an aromatic L-alpha-amino acid + 2-oxoglutarate = an aromatic oxo-acid + L-glutamate. It carries out the reaction L-aspartate + 2-oxoglutarate = oxaloacetate + L-glutamate. It participates in amino-acid biosynthesis; L-methionine biosynthesis via salvage pathway; L-methionine from S-methyl-5-thio-alpha-D-ribose 1-phosphate: step 6/6. Inhibited by malate and nitrotyrosine by approximately 20% at the higher concentration. At 100 uM, canaline and carboxymethoxylamine inhibit aminotransferase activity by 35 and 70%, respectively. Addition of 1.0 mM carboxymethoxylamine lead to a complete inhibition of the aminotransferase activity. In terms of biological role, catalyzes the formation of methionine from 2-keto-4-methylthiobutyrate (KMTB) primarily using aromatic amino acids (tyrosine, phenylalanine and tryptophan) or glutamate as the amino donors. Histidine, leucine, asparagine, or arginine are also functional amino donors but to a lesser extent. Can also use alpha-ketoglutarate, oxaloacetate and pyruvate as the amino acceptors. This chain is Tyrosine aminotransferase (tyrB), found in Klebsiella pneumoniae.